The following is a 322-amino-acid chain: Cytochrome f (322 aa).

The signal sequence occupies residues 1–35 (MQTRNTFSWTWIREEITRSISVSLMIYIITWSSIS). Heme contacts are provided by Y38, C58, C61, and H62. Residues 288-308 (VQGLLFFLGSVVLAQIFLVLK) form a helical membrane-spanning segment.

Belongs to the cytochrome f family. In terms of assembly, the 4 large subunits of the cytochrome b6-f complex are cytochrome b6, subunit IV (17 kDa polypeptide, petD), cytochrome f and the Rieske protein, while the 4 small subunits are PetG, PetL, PetM and PetN. The complex functions as a dimer. The cofactor is heme.

It is found in the plastid. The protein localises to the chloroplast thylakoid membrane. Component of the cytochrome b6-f complex, which mediates electron transfer between photosystem II (PSII) and photosystem I (PSI), cyclic electron flow around PSI, and state transitions. The sequence is that of Cytochrome f from Aethionema cordifolium (Lebanon stonecress).